The primary structure comprises 95 residues: High mobility group nucleosome-binding domain-containing protein 3 (95 aa).

Basic and acidic residues-rich tracts occupy residues M1–R25, P39–G53, and G62–K72. The disordered stretch occupies residues M1–H95. Phosphoserine is present on S6. Phosphoserine is present on S78.

Belongs to the HMGN family. Interacts with the ligand binding domain of the thyroid receptor (TR) (in vitro). Requires the presence of thyroid hormone for its interaction. Interacts with transcriptional regulator SEHBP. Interacts with nucleosomes.

It localises to the nucleus. Binds to nucleosomes, regulating chromatin structure and consequently, chromatin-dependent processes such as transcription, DNA replication and DNA repair. Affects both insulin and glucagon levels and modulates the expression of pancreatic genes involved in insulin secretion. Regulates the expression of the glucose transporter SLC2A2 by binding specifically to its promoter region and recruiting PDX1 and additional transcription factors. Regulates the expression of SLC6A9, a glycine transporter which regulates the glycine concentration in synaptic junctions in the central nervous system, by binding to its transcription start site. May play a role in ocular development and astrocyte function. In Rattus norvegicus (Rat), this protein is High mobility group nucleosome-binding domain-containing protein 3 (Hmgn3).